A 292-amino-acid chain; its full sequence is 11-beta-hydroxysteroid dehydrogenase 1 (292 aa).

At 2–7 (AFMKKY) the chain is on the cytoplasmic side. Residues 8-24 (LLPLLGLFLAYYYYSAN) traverse the membrane as a helical; Signal-anchor for type II membrane protein segment. The Lumenal portion of the chain corresponds to 25–292 (EEFRPEMLQG…KFDISKLVNN (268 aa)). NADP(+)-binding positions include 41–67 (GASKGIGKEIAFHLAKMGAHVVVTARS), 92–93 (TM), and 119–121 (NHI). N-linked (GlcNAc...) asparagine glycans are attached at residues Asn-123 and Asn-162. Residue Ser-170 participates in substrate binding. Tyr-183 acts as the Proton acceptor in catalysis. 183-187 (YSASK) contacts NADP(+). A glycan (N-linked (GlcNAc...) asparagine) is linked at Asn-207. 218 to 222 (IDTDT) lines the NADP(+) pocket.

This sequence belongs to the short-chain dehydrogenases/reductases (SDR) family. Homodimer. In terms of processing, glycosylated. As to expression, expressed in the eye.

It is found in the endoplasmic reticulum membrane. The protein resides in the microsome membrane. The catalysed reaction is an 11beta-hydroxysteroid + NADP(+) = an 11-oxosteroid + NADPH + H(+). The enzyme catalyses corticosterone + NADP(+) = 11-dehydrocorticosterone + NADPH + H(+). It carries out the reaction cortisone + NADPH + H(+) = cortisol + NADP(+). It catalyses the reaction a 7beta-hydroxysteroid + NADP(+) = a 7-oxosteroid + NADPH + H(+). The catalysed reaction is 7-oxocholesterol + NADPH + H(+) = 7beta-hydroxycholesterol + NADP(+). The enzyme catalyses chenodeoxycholate + NADP(+) = 7-oxolithocholate + NADPH + H(+). It carries out the reaction 7-oxolithocholate + NADPH + H(+) = ursodeoxycholate + NADP(+). It catalyses the reaction glycochenodeoxycholate + NADP(+) = 7-oxoglycolithocholate + NADPH + H(+). The catalysed reaction is taurochenodeoxycholate + NADP(+) = 7-oxotaurolithocholate + NADPH + H(+). The enzyme catalyses tauroursodeoxycholate + NADP(+) = 7-oxotaurolithocholate + NADPH + H(+). It carries out the reaction glycoursodeoxycholate + NADP(+) = 7-oxoglycolithocholate + NADPH + H(+). It catalyses the reaction 7-oxopregnenolone + NADPH + H(+) = 7beta-hydroxypregnenolone + NADP(+). The catalysed reaction is 3beta,7alpha-dihydroxyandrost-5-en-17-one + NADP(+) = 3beta-hydroxy-5-androstene-7,17-dione + NADPH + H(+). The enzyme catalyses 3beta-hydroxy-5-androstene-7,17-dione + NADPH + H(+) = 3beta,7beta-dihydroxyandrost-5-en-17-one + NADP(+). It carries out the reaction 3beta-hydroxy-5alpha-androstane-7,17-dione + NADPH + H(+) = 3beta,7beta-dihydroxy-5alpha-androstan-17-one + NADP(+). Its pathway is steroid metabolism. Controls the reversible conversion of biologically active glucocorticoids such as cortisone to cortisol, and 11-dehydrocorticosterone to corticosterone in the presence of NADP(H). Participates in the corticosteroid receptor-mediated anti-inflammatory response, as well as metabolic and homeostatic processes. Plays a role in the secretion of aqueous humor in the eye, maintaining a normotensive, intraocular environment. Bidirectional in vitro, predominantly functions as a reductase in vivo, thereby increasing the concentration of active glucocorticoids. It has broad substrate specificity, besides glucocorticoids, it accepts other steroid and sterol substrates. It has broad substrate specificity, besides glucocorticoids, it accepts other steroid and sterol substrates. Interconverts 7-oxo- and 7-hydroxy-neurosteroids such as 7-oxopregnenolone and 7beta-hydroxypregnenolone, 7-oxodehydroepiandrosterone (3beta-hydroxy-5-androstene-7,17-dione) and 7beta-hydroxydehydroepiandrosterone (3beta,7beta-dihydroxyandrost-5-en-17-one), among others. Catalyzes the stereo-specific conversion of the major dietary oxysterol, 7-ketocholesterol (7-oxocholesterol), into the more polar 7-beta-hydroxycholesterol metabolite. 7-oxocholesterol is one of the most important oxysterols, it participates in several events such as induction of apoptosis, accumulation in atherosclerotic lesions, lipid peroxidation, and induction of foam cell formation. Mediates the 7-oxo reduction of 7-oxolithocholate mainly to chenodeoxycholate, and to a lesser extent to ursodeoxycholate, both in its free form and when conjugated to glycine or taurine, providing a link between glucocorticoid activation and bile acid metabolism. Catalyzes the synthesis of 7-beta-25-dihydroxycholesterol from 7-oxo-25-hydroxycholesterol in vitro, which acts as a ligand for the G-protein-coupled receptor (GPCR) Epstein-Barr virus-induced gene 2 (EBI2) and may thereby regulate immune cell migration. The polypeptide is 11-beta-hydroxysteroid dehydrogenase 1 (Oryctolagus cuniculus (Rabbit)).